The sequence spans 420 residues: D-tagatose-1,6-bisphosphate aldolase subunit GatZ (420 aa).

Belongs to the GatZ/KbaZ family. GatZ subfamily. As to quaternary structure, forms a complex with GatY.

The protein operates within carbohydrate metabolism; D-tagatose 6-phosphate degradation; D-glyceraldehyde 3-phosphate and glycerone phosphate from D-tagatose 6-phosphate: step 2/2. Component of the tagatose-1,6-bisphosphate aldolase GatYZ that is required for full activity and stability of the Y subunit. Could have a chaperone-like function for the proper and stable folding of GatY. When expressed alone, GatZ does not show any aldolase activity. Is involved in the catabolism of galactitol. In Shigella flexneri serotype 5b (strain 8401), this protein is D-tagatose-1,6-bisphosphate aldolase subunit GatZ.